The chain runs to 695 residues: Serotransferrin (695 aa).

An N-terminal signal peptide occupies residues 1–19 (MRLAAGALLACAALGLCLA). 2 Transferrin-like domains span residues 25–347 (VRWC…NLRE) and 361–680 (VKWC…NLRK). Disulfide bonds link Cys-28–Cys-67 and Cys-38–Cys-58. Position 42 is a dimethylated arginine (Arg-42). Fe(3+) contacts are provided by Asp-82 and Tyr-114. 17 disulfides stabilise this stretch: Cys-137–Cys-213, Cys-156–Cys-350, Cys-177–Cys-193, Cys-180–Cys-196, Cys-190–Cys-198, Cys-246–Cys-260, Cys-358–Cys-612, Cys-364–Cys-396, Cys-374–Cys-387, Cys-421–Cys-690, Cys-436–Cys-653, Cys-468–Cys-539, Cys-492–Cys-681, Cys-502–Cys-516, Cys-513–Cys-522, Cys-579–Cys-593, and Cys-631–Cys-636. Hydrogencarbonate is bound by residues Thr-139, Arg-143, Ala-145, and Gly-146. Residue Tyr-207 coordinates Fe(3+). Residue His-268 participates in Fe(3+) binding. Ser-389 bears the Phosphoserine mark. The Fe(3+) site is built by Asp-411 and Tyr-444. Residues Thr-470, Arg-474, Ala-476, and Gly-477 each coordinate hydrogencarbonate. N-linked (GlcNAc...) asparagine glycosylation is present at Asn-509. Tyr-533 provides a ligand contact to Fe(3+). Residue His-601 participates in Fe(3+) binding. At Ser-682 the chain carries Phosphoserine.

This sequence belongs to the transferrin family. Monomer. Part of a complex composed of SLC40A1/ferroportin, TF/transferrin and HEPH/hephaestin that transfers iron from cells to transferrin. In terms of tissue distribution, expressed by the liver and secreted in plasma.

The protein localises to the secreted. Functionally, transferrins are iron binding transport proteins which can bind two Fe(3+) ions in association with the binding of an anion, usually bicarbonate. It is responsible for the transport of iron from sites of absorption and heme degradation to those of storage and utilization. Serum transferrin may also have a further role in stimulating cell proliferation. The protein is Serotransferrin (TF) of Oryctolagus cuniculus (Rabbit).